The primary structure comprises 362 residues: Probable prephenate dehydrogenase NovF (362 aa).

Residues 2-283 (RTAVIIGTGM…GIDGSNRVPG (282 aa)) form the Prephenate/arogenate dehydrogenase domain.

This sequence belongs to the prephenate/arogenate dehydrogenase family.

The catalysed reaction is prephenate + NAD(+) = 3-(4-hydroxyphenyl)pyruvate + CO2 + NADH. The protein operates within antibiotic biosynthesis; novobiocin biosynthesis. Functionally, probable prephenate dehydrogenase that produces 4-hydroxyphenylpyruvate (4HPP) in the novobiocin biosynthesis pathway. Novobiocin is an aminocoumarin family antibiotic that targets bacterial DNA gyrases. The polypeptide is Probable prephenate dehydrogenase NovF (novF) (Streptomyces niveus (Streptomyces spheroides)).